The chain runs to 211 residues: Uridine kinase (211 aa).

Residue 15-22 participates in ATP binding; that stretch reads GGSGSGKT.

This sequence belongs to the uridine kinase family.

The protein resides in the cytoplasm. The catalysed reaction is uridine + ATP = UMP + ADP + H(+). It catalyses the reaction cytidine + ATP = CMP + ADP + H(+). Its pathway is pyrimidine metabolism; CTP biosynthesis via salvage pathway; CTP from cytidine: step 1/3. The protein operates within pyrimidine metabolism; UMP biosynthesis via salvage pathway; UMP from uridine: step 1/1. The protein is Uridine kinase of Lactobacillus helveticus (strain DPC 4571).